The primary structure comprises 409 residues: 5-aminolevulinate synthase (409 aa).

Succinyl-CoA-binding residues include Arg21, Ser137, and Lys156. The pyridoxal 5'-phosphate site is built by Ser189, His217, and Thr245. Residue Lys248 is part of the active site. An N6-(pyridoxal phosphate)lysine modification is found at Lys248. 2 residues coordinate pyridoxal 5'-phosphate: Ser277 and Thr278. Thr365 is a binding site for succinyl-CoA.

The protein belongs to the class-II pyridoxal-phosphate-dependent aminotransferase family. In terms of assembly, homodimer. Pyridoxal 5'-phosphate serves as cofactor.

It carries out the reaction succinyl-CoA + glycine + H(+) = 5-aminolevulinate + CO2 + CoA. Its pathway is porphyrin-containing compound metabolism; protoporphyrin-IX biosynthesis; 5-aminolevulinate from glycine: step 1/1. The protein is 5-aminolevulinate synthase (hemA) of Rhodobacter capsulatus (strain ATCC BAA-309 / NBRC 16581 / SB1003).